Reading from the N-terminus, the 96-residue chain is Conantokin Rl-B (96 aa).

A signal peptide spans 1–21 (MQLYTYLYLLVPLVTFHLILG). The propeptide occupies 22 to 78 (TGTLDHGDALTERRSTDATALKPEPVLLQKSSARSTNDNGKDTQMKRILKKRGNKAR). The segment at 51 to 96 (KSSARSTNDNGKDTQMKRILKKRGNKARGEEELAEKAPEFARELAN) is disordered. Positions 77-96 (ARGEEELAEKAPEFARELAN) are enriched in basic and acidic residues. Residue E81 coordinates a divalent metal cation. A 4-carboxyglutamate mark is found at E81, E82, and E85. E85 is an a divalent metal cation binding site. Position 88 is a 4-hydroxyproline (P88). Residues E89 and E93 each contribute to the a divalent metal cation site. E89 and E93 each carry 4-carboxyglutamate. N96 is subject to Asparagine amide.

This sequence belongs to the conotoxin B superfamily. Ca(2+) is required as a cofactor. Requires Mg(2+) as cofactor. Hydroxylation of Pro-88 is important for NR2B/GRIN2B NMDA receptor selectivity. Removal of hydroxylation does not change global NMDA receptor antagonism (tested on WT neurons), but it decreases the inhibitory potency on NR2B/GRIN2B NMDA receptors and increases the inhibitory potency on NR2A/GRIN2A NMDA receptors. Hydroxylation of Pro-88 locally disrupts a small region of the divalent cation-induced alpha-helix but does not destabilize the entire helix. As to expression, expressed by the venom duct.

Its subcellular location is the secreted. Its function is as follows. Conantokins inhibit N-methyl-D-aspartate (NMDA) receptors. This toxin has antagonist activity on the NR2B/GRIN2B subunit (IC(50)=0.1 uM). In vivo, when delivered into the brain, is active has anticonvulsant activity in the model of epilepsy in mice. This is Conantokin Rl-B from Conus rolani (Cone snail).